The chain runs to 536 residues: Membrane protein insertase YidC (536 aa).

A helical transmembrane segment spans residues 7–27 (IIAVVLSLFVLIGWSYLSEFM). A disordered region spans residues 43–70 (VQQKASEPVAQPVQTASAPAASSFAPTE). Residues 58 to 68 (ASAPAASSFAP) show a composition bias toward low complexity. Helical transmembrane passes span 346–366 (GNYGVAIIILTILVKLLFWPL), 415–435 (GGCLPMLLQIPVFLGLYQGLL), and 495–515 (IMMFMPVVFTFMFLNFPAGLV).

It belongs to the OXA1/ALB3/YidC family. Type 1 subfamily. As to quaternary structure, interacts with the Sec translocase complex via SecD. Specifically interacts with transmembrane segments of nascent integral membrane proteins during membrane integration.

Its subcellular location is the cell inner membrane. Functionally, required for the insertion and/or proper folding and/or complex formation of integral membrane proteins into the membrane. Involved in integration of membrane proteins that insert both dependently and independently of the Sec translocase complex, as well as at least some lipoproteins. Aids folding of multispanning membrane proteins. This chain is Membrane protein insertase YidC, found in Oleidesulfovibrio alaskensis (strain ATCC BAA-1058 / DSM 17464 / G20) (Desulfovibrio alaskensis).